A 563-amino-acid polypeptide reads, in one-letter code: Arginine--tRNA ligase (563 aa).

The 'HIGH' region signature appears at 120–130 (PNIAKPFHIGH).

This sequence belongs to the class-I aminoacyl-tRNA synthetase family. Monomer.

It localises to the cytoplasm. It catalyses the reaction tRNA(Arg) + L-arginine + ATP = L-arginyl-tRNA(Arg) + AMP + diphosphate. The polypeptide is Arginine--tRNA ligase (Clostridium botulinum (strain ATCC 19397 / Type A)).